Reading from the N-terminus, the 538-residue chain is Lipid scramblase CLPTM1L (538 aa).

Over 1–9 the chain is Cytoplasmic; it reads MFPKTSFTS. The chain crosses the membrane as a helical span at residues 10–30; it reads LIVGVFLLYVLHTCWVMYGIV. Residues 31–284 lie on the Extracellular side of the membrane; that stretch reads YTKPCEKRRA…IKGIFVDTNL (254 aa). N-linked (GlcNAc...) asparagine glycosylation is found at N90 and N100. Residues 140-166 are disordered; it reads ISLITGQDEPEKPDQQKQSSDSELDRP. N229 is a glycosylation site (N-linked (GlcNAc...) asparagine). A helical transmembrane segment spans residues 285–305; it reads YFLALTFFVAAFHLLFDFLAF. The Cytoplasmic portion of the chain corresponds to 306–324; the sequence is KNDISFWKHKKSMVGMSSK. The chain crosses the membrane as a helical span at residues 325–341; it reads AVLWRCFSTIVIFLYLL. Residues 342–402 are Extracellular-facing; that stretch reads DEQTSLLVLV…TEEYDTLAMK (61 aa). A helical transmembrane segment spans residues 403–423; the sequence is YLSYLLYPLCVGGAVYALVFV. Residues 424 to 428 are Cytoplasmic-facing; that stretch reads KYKSW. A helical transmembrane segment spans residues 429–449; it reads YSWIINSLVNGVYAFGFLFML. At 450–538 the chain is on the extracellular side; it reads PQLFVNYKLK…EKPKGKSHED (89 aa).

It belongs to the CLPTM1 family.

The protein localises to the endoplasmic reticulum membrane. The enzyme catalyses a 6-(alpha-D-glucosaminyl)-1-(1,2-diacyl-sn-glycero-3-phospho)-1D-myo-inositol(in) = a 6-(alpha-D-glucosaminyl)-1-(1,2-diacyl-sn-glycero-3-phospho)-1D-myo-inositol(out). The catalysed reaction is 6-(alpha-D-glucosaminyl)-(1-octadecanoyl,2-(9Z)-octadecenoyl-sn-glycero-3-phospho)-1D-myo-inositol(in) = 6-(alpha-D-glucosaminyl)-(1-octadecanoyl,2-(9Z)-octadecenoyl-sn-glycero-3-phospho)-1D-myo-inositol(out). It carries out the reaction a 1,2-diacyl-sn-glycero-3-phospho-(1D-myo-inositol)(in) = a 1,2-diacyl-sn-glycero-3-phospho-(1D-myo-inositol)(out). It catalyses the reaction a 1,2-diacyl-sn-glycero-3-phosphocholine(in) = a 1,2-diacyl-sn-glycero-3-phosphocholine(out). The enzyme catalyses a 1,2-diacyl-sn-glycero-3-phosphoethanolamine(in) = a 1,2-diacyl-sn-glycero-3-phosphoethanolamine(out). Functionally, scramblase that mediates the translocation of glucosaminylphosphatidylinositol (alpha-D-GlcN-(1-6)-(1,2-diacyl-sn-glycero-3-phospho)-1D-myo-inositol, GlcN-PI) across the endoplasmic reticulum (ER) membrane, from the cytosolic leaflet to the luminal leaflet of the ER membrane, where it participates in the biosynthesis of glycosylphosphatidylinositol (GPI). GPI is a lipid glycoconjugate involved in post-translational modification of proteins. Can also translocate 1,2-diacyl-sn-glycero-3-phospho-(1D-myo-inositol) (phosphatidylinositol or PI), as well as several other phospholipids (1,2-diacyl-sn-glycero-3-phosphocholine, 1,2-diacyl-sn-glycero-3-phosphoethanolamine), and N-acetylglucosaminylphosphatidylinositol (GlcNAc-PI) in vitro. This Danio rerio (Zebrafish) protein is Lipid scramblase CLPTM1L (clptm1l).